The following is a 197-amino-acid chain: 3-isopropylmalate dehydratase small subunit (197 aa).

Belongs to the LeuD family. LeuD type 1 subfamily. In terms of assembly, heterodimer of LeuC and LeuD.

The enzyme catalyses (2R,3S)-3-isopropylmalate = (2S)-2-isopropylmalate. The protein operates within amino-acid biosynthesis; L-leucine biosynthesis; L-leucine from 3-methyl-2-oxobutanoate: step 2/4. Functionally, catalyzes the isomerization between 2-isopropylmalate and 3-isopropylmalate, via the formation of 2-isopropylmaleate. The protein is 3-isopropylmalate dehydratase small subunit of Azobacteroides pseudotrichonymphae genomovar. CFP2.